Here is a 110-residue protein sequence, read N- to C-terminus: HTH-type transcriptional regulator TnrA (110 aa).

The HTH merR-type domain maps to 13–81; it reads VISIGIVSEL…TAEILKDMRK (69 aa). Positions 16 to 35 form a DNA-binding region, H-T-H motif; sequence IGIVSELTGLSVRQIRYYEE.

As to quaternary structure, homodimer. Under conditions of nitrogen excess, TnrA forms a stable complex with feedback-inhibited GlnA. Interacts with GlnK-AmtB complex.

It is found in the cell membrane. Under conditions of nitrogen excess, the DNA-binding activity is inhibited by the formation of a stable complex with feedback-inhibited GlnA. The presence of glutamine and AMP increases the inhibitory activity of glutamine synthetase by more than 1000-fold. Functionally, transcription regulator that actives the transcription of genes required for nitrogen assimilation such as nrgAB (ammonium transport), nasABCDEF (nitrate/nitrite assimilation), ureABC (urea degradation) and gabP (GABA transport), during nitrogen limitation. Also represses glnRA and gltAB in the absence of ammonium. On the contrary of the MerR members, which require longer DNA sites for high-affinity binding, TnrA requires a DNA sequence of 17 nucleotides as minimal binding site. This chain is HTH-type transcriptional regulator TnrA, found in Bacillus subtilis (strain 168).